We begin with the raw amino-acid sequence, 206 residues long: Probable NAD(+) phosphorylase Rv3189 (206 aa).

It belongs to the MbcT/ParT/Res family. As to quaternary structure, forms a heterotetramer with cognate antitoxin Rv3188.

It catalyses the reaction phosphate + NAD(+) = ADP-alpha-D-ribose 1''-phosphate + nicotinamide + H(+). Probable toxic component of a type II toxin-antitoxin (TA) system. Degrades NAD(+) by phosphorolysis. Neutralized by its cognate antitoxin Rv3188. The sequence is that of Probable NAD(+) phosphorylase Rv3189 from Mycobacterium tuberculosis (strain ATCC 25618 / H37Rv).